We begin with the raw amino-acid sequence, 93 residues long: Small ribosomal subunit protein uS15c (93 aa).

It belongs to the universal ribosomal protein uS15 family. In terms of assembly, part of the 30S ribosomal subunit.

The protein localises to the plastid. The protein resides in the chloroplast. In Jasminum nudiflorum (Winter jasmine), this protein is Small ribosomal subunit protein uS15c (rps15).